The primary structure comprises 247 residues: Oil body-associated protein 2A (247 aa).

The tract at residues 1–26 (MASSDERPGAYPARDGSENLPPGDPK) is disordered.

The protein belongs to the OBAP family.

In Arabidopsis thaliana (Mouse-ear cress), this protein is Oil body-associated protein 2A.